The following is a 166-amino-acid chain: Cyclin-dependent kinase 4 inhibitor D (166 aa).

The residue at position 1 (methionine 1) is an N-acetylmethionine. 4 ANK repeats span residues 41–69, 73–102, 106–135, and 138–165; these read FGKT…SPNV, SGTS…DVNA, TGSL…LHHR, and SGLT…MMIP.

This sequence belongs to the CDKN2 cyclin-dependent kinase inhibitor family. Interacts with CDK6.

The protein localises to the nucleus. It localises to the cytoplasm. Interacts strongly with CDK4 and CDK6 and inhibits them. The polypeptide is Cyclin-dependent kinase 4 inhibitor D (Cdkn2d) (Mus musculus (Mouse)).